A 311-amino-acid polypeptide reads, in one-letter code: Deacetoxycephalosporin C synthase (311 aa).

In terms of domain architecture, Fe2OG dioxygenase spans 154-267 (DCEPLLRFRY…RTSSVFFLRP (114 aa)).

Belongs to the iron/ascorbate-dependent oxidoreductase family. The cofactor is Fe cation. L-ascorbate serves as cofactor.

The enzyme catalyses penicillin N + 2-oxoglutarate + O2 = deacetoxycephalosporin C + succinate + CO2 + H2O. It participates in antibiotic biosynthesis; cephalosporin C biosynthesis. In terms of biological role, catalyzes the step from penicillin N to deacetoxy-cephalosporin C. The chain is Deacetoxycephalosporin C synthase (cefE) from Streptomyces clavuligerus.